Here is an 837-residue protein sequence, read N- to C-terminus: CoA-transferase/lyase DddD (837 aa).

Residue Asp-602 is the Nucleophile of the active site.

Belongs to the CoA-transferase III family.

Functionally, dimethyl sulfide (DMS)-producing enzyme. Acts both as a transferase and a lyase: uses acetyl-coenzyme A (acetyl-coA) and dimethylsulfoniopropionate (DMSP) as substrates to produce DMS, acetate and 3-hydroxypropionate-CoA (3HP-CoA). Mediates the CoA-transferase prior to lyase activity. DMS is the principal form by which sulfur is transported from oceans to the atmosphere and is a key component of the ocean sulfur cycle. This Marinomonas sp. (strain MWYL1) protein is CoA-transferase/lyase DddD.